A 180-amino-acid polypeptide reads, in one-letter code: tRNA (cytidine(56)-2'-O)-methyltransferase (180 aa).

S-adenosyl-L-methionine is bound at residue Leu85.

This sequence belongs to the aTrm56 family. As to quaternary structure, homodimer.

It is found in the cytoplasm. The catalysed reaction is cytidine(56) in tRNA + S-adenosyl-L-methionine = 2'-O-methylcytidine(56) in tRNA + S-adenosyl-L-homocysteine + H(+). Its function is as follows. Specifically catalyzes the AdoMet-dependent 2'-O-ribose methylation of cytidine at position 56 in tRNAs. The sequence is that of tRNA (cytidine(56)-2'-O)-methyltransferase from Methanobrevibacter smithii (strain ATCC 35061 / DSM 861 / OCM 144 / PS).